The primary structure comprises 124 residues: Putative membrane protein insertion efficiency factor (124 aa).

Belongs to the UPF0161 family.

The protein localises to the cell inner membrane. Functionally, could be involved in insertion of integral membrane proteins into the membrane. In Psychrobacter arcticus (strain DSM 17307 / VKM B-2377 / 273-4), this protein is Putative membrane protein insertion efficiency factor.